We begin with the raw amino-acid sequence, 125 residues long: MPTINQLVRQGREVEKIKSKSPAMENSPQRRGVCTRVYTTTPKKPNSALRKVAKVRLTNGFEIISYIGGEGHNLQEHSVVLVRGGRVKDLPGVRYHIVRGSLDLQGVKDRKQSRSKYGAKRPKAK.

The tract at residues 9–31 (RQGREVEKIKSKSPAMENSPQRR) is disordered. D89 bears the 3-methylthioaspartic acid mark. The tract at residues 105–125 (QGVKDRKQSRSKYGAKRPKAK) is disordered. Positions 113-125 (SRSKYGAKRPKAK) are enriched in basic residues.

The protein belongs to the universal ribosomal protein uS12 family. In terms of assembly, part of the 30S ribosomal subunit. Contacts proteins S8 and S17. May interact with IF1 in the 30S initiation complex.

With S4 and S5 plays an important role in translational accuracy. In terms of biological role, interacts with and stabilizes bases of the 16S rRNA that are involved in tRNA selection in the A site and with the mRNA backbone. Located at the interface of the 30S and 50S subunits, it traverses the body of the 30S subunit contacting proteins on the other side and probably holding the rRNA structure together. The combined cluster of proteins S8, S12 and S17 appears to hold together the shoulder and platform of the 30S subunit. This chain is Small ribosomal subunit protein uS12, found in Polaromonas naphthalenivorans (strain CJ2).